The sequence spans 296 residues: tRNA dimethylallyltransferase (296 aa).

2 to 9 is an ATP binding site; that stretch reads GPTASGKT. 4–9 provides a ligand contact to substrate; sequence TASGKT. Interaction with substrate tRNA stretches follow at residues 27-30, 151-155, and 232-237; these read DSAL, QRLSR, and RCVGYR.

It belongs to the IPP transferase family. As to quaternary structure, monomer. Requires Mg(2+) as cofactor.

It catalyses the reaction adenosine(37) in tRNA + dimethylallyl diphosphate = N(6)-dimethylallyladenosine(37) in tRNA + diphosphate. Its function is as follows. Catalyzes the transfer of a dimethylallyl group onto the adenine at position 37 in tRNAs that read codons beginning with uridine, leading to the formation of N6-(dimethylallyl)adenosine (i(6)A). The polypeptide is tRNA dimethylallyltransferase (Shewanella sp. (strain MR-7)).